The chain runs to 278 residues: MINEILDKVVRLLEEVRAKKPLVHSITNYITATDCANVILAVGGSPTMADYVKEVEEIASISSAVVLNMGVISDGMVESMILAGKSANKNNVPVIFDPVGAGVANFRNESAEKILSEVKIDIIRGNISEIKFICGLSSETKGVDASESDMNMGNDKKAIVAQELAKKLNCVVAITGVDDIISDGKRNVILSNGHKMLANVTGTGCMSSALCGAFAGASNDYFIAAICAILTMGISGEIAYEKSKGIGMGTFHTSLIDAISMMNENIIKEKAKVTTINR.

Residue Met-48 coordinates substrate. Residues Arg-124 and Thr-175 each contribute to the ATP site. Gly-202 contributes to the substrate binding site.

The protein belongs to the Thz kinase family. It depends on Mg(2+) as a cofactor.

The enzyme catalyses 5-(2-hydroxyethyl)-4-methylthiazole + ATP = 4-methyl-5-(2-phosphooxyethyl)-thiazole + ADP + H(+). The protein operates within cofactor biosynthesis; thiamine diphosphate biosynthesis; 4-methyl-5-(2-phosphoethyl)-thiazole from 5-(2-hydroxyethyl)-4-methylthiazole: step 1/1. Its function is as follows. Catalyzes the phosphorylation of the hydroxyl group of 4-methyl-5-beta-hydroxyethylthiazole (THZ). This chain is Hydroxyethylthiazole kinase, found in Clostridium botulinum (strain Eklund 17B / Type B).